The primary structure comprises 88 residues: uncharacterized protein (88 aa).

Transmembrane regions (helical) follow at residues 8 to 28 (IFLSFFSPIYLSLLLNGSIFF) and 45 to 65 (ELLRCQICLCSLFWMVTVINL).

The protein resides in the membrane. This is an uncharacterized protein from Saccharomyces cerevisiae (strain ATCC 204508 / S288c) (Baker's yeast).